The chain runs to 547 residues: ATP synthase subunit alpha (547 aa).

172–179 (GDRKTGKT) lines the ATP pocket.

Belongs to the ATPase alpha/beta chains family. In terms of assembly, F-type ATPases have 2 components, CF(1) - the catalytic core - and CF(0) - the membrane proton channel. CF(1) has five subunits: alpha(3), beta(3), gamma(1), delta(1), epsilon(1). CF(0) has three main subunits: a(1), b(2) and c(9-12). The alpha and beta chains form an alternating ring which encloses part of the gamma chain. CF(1) is attached to CF(0) by a central stalk formed by the gamma and epsilon chains, while a peripheral stalk is formed by the delta and b chains.

It is found in the cell membrane. The enzyme catalyses ATP + H2O + 4 H(+)(in) = ADP + phosphate + 5 H(+)(out). In terms of biological role, produces ATP from ADP in the presence of a proton gradient across the membrane. The alpha chain is a regulatory subunit. This Corynebacterium glutamicum (strain R) protein is ATP synthase subunit alpha.